Here is an 89-residue protein sequence, read N- to C-terminus: Myrmicitoxin(1)-Pr2a (89 aa).

A signal peptide spans 1-23; that stretch reads MEIPKLLYIAVIAIGLSGSLTCA. Residues 24–61 constitute a propeptide that is removed on maturation; that stretch reads TPLANPWADPEAEANPEAKAIAEATAEAIAEALAEPEP. Position 88 is an asparagine amide (asparagine 88).

It belongs to the formicidae venom clade 1 family. As to expression, expressed by the venom gland.

Its subcellular location is the secreted. Its function is as follows. Vertebrate-selective toxin that causes pain by targeting voltage-gated sodium channels. The protein is Myrmicitoxin(1)-Pr2a of Pogonomyrmex rugosus (Desert harvester ant).